A 210-amino-acid polypeptide reads, in one-letter code: Hydrogenase expression/formation protein HupD (210 aa).

Glu-22, Asp-68, and His-99 together coordinate Ni(2+).

It belongs to the peptidase A31 family.

Functionally, not known. Could be involved in the processing of hydrogenase. The sequence is that of Hydrogenase expression/formation protein HupD (hupD) from Rhodobacter capsulatus (Rhodopseudomonas capsulata).